The primary structure comprises 106 residues: Thioredoxin (106 aa).

At K3 the chain carries N6-acetyllysine. The Thioredoxin domain maps to 3–106 (KQIESKTAFQ…KLEATINELV (104 aa)). An N6-succinyllysine modification is found at K8. Catalysis depends on nucleophile residues C32 and C35. A disulfide bridge connects residues C32 and C35. Position 39 is an N6-acetyllysine (K39). 2 positions are modified to S-nitrosocysteine: C62 and C69. C73 carries the post-translational modification S-nitrosocysteine; alternate. An N6-acetyllysine; alternate modification is found at K95. At K95 the chain carries N6-succinyllysine; alternate.

It belongs to the thioredoxin family. As to quaternary structure, homodimer; disulfide-linked. Interacts with TXNIP through the redox-active site. Interacts with MAP3K5 and CASP3. Interacts with APEX1; the interaction stimulates the FOS/JUN AP-1 DNA-binding activity in a redox-dependent manner. In the fully reduced protein, both Cys-69 and Cys-73 are nitrosylated in response to nitric oxide (NO). When two disulfide bonds are present in the protein, only Cys-73 is nitrosylated. Cys-73 can serve as donor for nitrosylation of target proteins.

It localises to the nucleus. Its subcellular location is the cytoplasm. It is found in the secreted. Its function is as follows. Participates in various redox reactions through the reversible oxidation of its active center dithiol to a disulfide and catalyzes dithiol-disulfide exchange reactions. Plays a role in the reversible S-nitrosylation of cysteine residues in target proteins, and thereby contributes to the response to intracellular nitric oxide. Nitrosylates the active site Cys of CASP3 in response to nitric oxide (NO), and thereby inhibits caspase-3 activity. Induces the FOS/JUN AP-1 DNA binding activity in ionizing radiation (IR) cells through its oxidation/reduction status and stimulates AP-1 transcriptional activity. The polypeptide is Thioredoxin (TXN) (Pongo abelii (Sumatran orangutan)).